Reading from the N-terminus, the 103-residue chain is CLAVATA3/ESR (CLE)-related protein 16 (103 aa).

Residues 1–21 (MEACSRKRRRRRAYTTSTTGY) form the signal peptide. Residues 71-103 (VSFTGQRREEENRDEVYKDDKRLVHTGPNPLHN) form a disordered region. Residues 76–93 (QRREEENRDEVYKDDKRL) show a composition bias toward basic and acidic residues. At proline 98 the chain carries Hydroxyproline. Residue proline 98 is glycosylated (O-linked (Ara...) hydroxyproline).

It belongs to the CLV3/ESR signal peptide family. Post-translationally, the O-glycosylation (arabinosylation) of the hydroxyproline Pro-98 enhances binding affinity of the CLE16p peptide for its receptor. Expressed in roots, stems, apex, seedlings, leaves, flowers and siliques.

It localises to the secreted. The protein resides in the extracellular space. Functionally, extracellular signal peptide that regulates cell fate. Represses root apical meristem maintenance. Regulates the transition of protophloem cells from proliferation to differentiation, thus impinging on postembryonic growth capacity of the root meristem; this signaling pathway requires CRN and CLV2. The protein is CLAVATA3/ESR (CLE)-related protein 16 of Arabidopsis thaliana (Mouse-ear cress).